We begin with the raw amino-acid sequence, 570 residues long: Trans-cinnamate:CoA ligase, peroxisomal (570 aa).

The Microbody targeting signal signature appears at 568–570 (ARL).

This sequence belongs to the ATP-dependent AMP-binding enzyme family. As to quaternary structure, monomer. The cofactor is K(+). In terms of tissue distribution, mostly expressed in flower organs, with highest levels in corollas and petal limbs, and, to a lesser extent, in petal tubes, sepals, pistils, stamen, stigma, anthers and ovaries. Also present at low levels in leaves, stems and roots.

The protein localises to the peroxisome. The enzyme catalyses (E)-4-coumarate + ATP + CoA = (E)-4-coumaroyl-CoA + AMP + diphosphate. The catalysed reaction is (E)-caffeate + ATP + CoA = (E)-caffeoyl-CoA + AMP + diphosphate. It carries out the reaction (E)-cinnamate + ATP + CoA = (E)-cinnamoyl-CoA + AMP + diphosphate. Its pathway is phenylpropanoid metabolism; trans-cinnamate biosynthesis. It participates in phytoalexin biosynthesis; 3,4',5-trihydroxystilbene biosynthesis; 3,4',5-trihydroxystilbene from trans-4-coumarate: step 1/2. In terms of biological role, involved in the biosynthesis of floral volatile benzenoid/phenylpropanoid (FVBP) scent (e.g. benzylbenzoate, phenylethylbenzoate, and methylbenzoate). Catalyzes the formation of CoA esters of cinnamic acid, and, with lower efficiency, of 4-coumaric acid and caffeic acid. This Petunia hybrida (Petunia) protein is Trans-cinnamate:CoA ligase, peroxisomal.